The following is a 156-amino-acid chain: MQATKSPDDLVKTFKSILKEERFGSQSEIVTALQAEGFSNINQSKVSRMLSKFGAVRTRNAKQEMVYCLPAELGVPTAGSPLKNLVLDVDHNQAMIVVRTSPGAAQLIARLLDSIGKPEGILGTIAGDDTIFICPSSIHNIEDTLETVKSLFNYAD.

This sequence belongs to the ArgR family.

It localises to the cytoplasm. It functions in the pathway amino-acid biosynthesis; L-arginine biosynthesis [regulation]. Regulates arginine biosynthesis genes. The sequence is that of Arginine repressor from Shewanella halifaxensis (strain HAW-EB4).